The sequence spans 235 residues: Small ribosomal subunit protein uS3 (235 aa).

Positions 39-107 (VRSYVKKKLI…PAQVNISEIR (69 aa)) constitute a KH type-2 domain.

It belongs to the universal ribosomal protein uS3 family. As to quaternary structure, part of the 30S ribosomal subunit. Forms a tight complex with proteins S10 and S14.

Its function is as follows. Binds the lower part of the 30S subunit head. Binds mRNA in the 70S ribosome, positioning it for translation. The chain is Small ribosomal subunit protein uS3 from Buchnera aphidicola subsp. Cinara cedri (strain Cc).